Consider the following 368-residue polypeptide: 3-dehydroquinate synthase (368 aa).

NAD(+) is bound by residues 71–76 (DGEAFK), 105–109 (GVVGD), 129–130 (TT), Lys142, Lys151, and 169–172 (TLRT). Positions 184, 247, and 264 each coordinate Zn(2+).

This sequence belongs to the sugar phosphate cyclases superfamily. Dehydroquinate synthase family. Requires Co(2+) as cofactor. It depends on Zn(2+) as a cofactor. NAD(+) serves as cofactor.

It is found in the cytoplasm. It catalyses the reaction 7-phospho-2-dehydro-3-deoxy-D-arabino-heptonate = 3-dehydroquinate + phosphate. The protein operates within metabolic intermediate biosynthesis; chorismate biosynthesis; chorismate from D-erythrose 4-phosphate and phosphoenolpyruvate: step 2/7. Functionally, catalyzes the conversion of 3-deoxy-D-arabino-heptulosonate 7-phosphate (DAHP) to dehydroquinate (DHQ). This Cupriavidus necator (strain ATCC 17699 / DSM 428 / KCTC 22496 / NCIMB 10442 / H16 / Stanier 337) (Ralstonia eutropha) protein is 3-dehydroquinate synthase.